Here is a 236-residue protein sequence, read N- to C-terminus: 3-deoxy-D-manno-octulosonic acid kinase (236 aa).

Asp-166 is an active-site residue.

Belongs to the protein kinase superfamily. KdkA/RfaP family.

Its subcellular location is the cell inner membrane. The catalysed reaction is an alpha-Kdo-(2-&gt;6)-lipid IVA + ATP = a 4-O-phospho-alpha-Kdo-(2-&gt;6)-lipid IVA + ADP + H(+). It participates in bacterial outer membrane biogenesis; LPS core biosynthesis. Its function is as follows. Catalyzes the ATP-dependent phosphorylation of the 3-deoxy-D-manno-octulosonic acid (Kdo) residue in Kdo-lipid IV(A) at the 4-OH position. This chain is 3-deoxy-D-manno-octulosonic acid kinase, found in Photobacterium profundum (strain SS9).